A 191-amino-acid polypeptide reads, in one-letter code: Lipid A 1-phosphatase (191 aa).

A run of 5 helical transmembrane segments spans residues 22-42 (LLAL…PKVP), 60-80 (FIPT…VGLF), 117-137 (GNFN…AFLM), 145-162 (YLWL…RIYL), and 164-184 (MHTI…VGLF).

The protein belongs to the lipid A LpxE 1-phosphatase family.

The protein resides in the cell inner membrane. The protein operates within bacterial outer membrane biogenesis; LPS lipid A biosynthesis. Functionally, removes the 1-phosphate group from tetra- and probably hexaacylated lipid A species. Absence of the 1-phosphate group renders the bacteria partially resistant to host-derived cationic antimicrobial peptides (CAMP), allowing it to camouflage itself from the host innate immune response, and plays a role in the long-term colonization of the host's stomach. The protein is Lipid A 1-phosphatase of Helicobacter pylori (strain J99 / ATCC 700824) (Campylobacter pylori J99).